A 149-amino-acid chain; its full sequence is Large ribosomal subunit protein eL19 (149 aa).

The segment at 46–99 is disordered; it reads EDGTIEAKTAKGNSRGRARKRQQKRAYGHKKGHGSRKGRSGGRQNEKEDWQSRI. A compositionally biased stretch (basic residues) spans 59 to 85; that stretch reads SRGRARKRQQKRAYGHKKGHGSRKGRS. Basic and acidic residues predominate over residues 89–99; that stretch reads QNEKEDWQSRI.

The protein belongs to the eukaryotic ribosomal protein eL19 family. Part of the 50S ribosomal subunit.

In terms of biological role, binds to the 23S rRNA. The protein is Large ribosomal subunit protein eL19 of Natronomonas pharaonis (strain ATCC 35678 / DSM 2160 / CIP 103997 / JCM 8858 / NBRC 14720 / NCIMB 2260 / Gabara) (Halobacterium pharaonis).